Reading from the N-terminus, the 133-residue chain is Ribosome-binding factor A (133 aa).

This sequence belongs to the RbfA family. Monomer. Binds 30S ribosomal subunits, but not 50S ribosomal subunits or 70S ribosomes.

It is found in the cytoplasm. Functionally, one of several proteins that assist in the late maturation steps of the functional core of the 30S ribosomal subunit. Associates with free 30S ribosomal subunits (but not with 30S subunits that are part of 70S ribosomes or polysomes). Required for efficient processing of 16S rRNA. May interact with the 5'-terminal helix region of 16S rRNA. The protein is Ribosome-binding factor A of Acinetobacter baylyi (strain ATCC 33305 / BD413 / ADP1).